A 146-amino-acid chain; its full sequence is MFGTVFRILDEKNRIVMPPAFRNELEGDFYISANLEKILEIRSQTEFDLLAQKIGKANSLDPKLRDFARYFFGNTVKVSADKQGRFLIPKNLLDLATISKNLYLIGVNNKIEIWPEQRYEQFYAKFSDSEMTADLEKELLKSGVEL.

2 consecutive SpoVT-AbrB domains span residues 4-46 (TVFR…SQTE) and 75-118 (TVKV…PEQR).

This sequence belongs to the MraZ family. Forms oligomers.

The protein localises to the cytoplasm. It is found in the nucleoid. The chain is Transcriptional regulator MraZ from Mesomycoplasma hyopneumoniae (strain 232) (Mycoplasma hyopneumoniae).